Here is a 543-residue protein sequence, read N- to C-terminus: Formin-binding protein 1-like (543 aa).

One can recognise an F-BAR domain in the interval 1–263; it reads MSWGTELWDQ…AAKSVDERRD (263 aa). Coiled-coil stretches lie at residues 66-258 and 334-426; these read FTSC…AKSV and LEDF…QRSE. The region spanning 339-416 is the REM-1 domain; that stretch reads HLPPEQRRKR…IHKNEGWLSE (78 aa). The interval 424 to 467 is disordered; that stretch reads RSERRHSAEANHLVAQGRESPEGSYTEDANQEGRVQPQHHAHPE. The SH3 domain maps to 479–540; the sequence is PAIGHCKSLY…PTSYIEITLE (62 aa).

The protein belongs to the FNBP1 family. In terms of assembly, homodimerizes, the dimers can polymerize end-to-end to form filamentous structures. Interacts with GTP-bound cdc42 and wasl/n-wasp.

The protein localises to the cytoplasm. The protein resides in the cytoskeleton. It localises to the cell cortex. It is found in the cytoplasmic vesicle. Its subcellular location is the cell membrane. Functionally, required to coordinate membrane tubulation with reorganization of the actin cytoskeleton during endocytosis. Essential for autophagy of intracellular bacterial pathogens. Promotes cdc42-induced actin polymerization by activating the wasl-waspip complex, the predominant form of wasl/n-wasp in cells. The polypeptide is Formin-binding protein 1-like (fnbp1l) (Xenopus laevis (African clawed frog)).